Consider the following 126-residue polypeptide: Protein VraC (126 aa).

This is Protein VraC from Staphylococcus haemolyticus (strain JCSC1435).